Consider the following 261-residue polypeptide: Cytochrome c oxidase subunit 3 (261 aa).

Over 1–15 (MTHQTHAYHMVNPSP) the chain is Mitochondrial matrix. A helical transmembrane segment spans residues 16–34 (WPLTGAMSALLLTSGLIMW). The Mitochondrial intermembrane segment spans residues 35–40 (FHFNSY). Residues 41–66 (TLLLLGLLTNLISSYQWWRDIVREGT) traverse the membrane as a helical segment. Topologically, residues 67–72 (YQGHHT) are mitochondrial matrix. Residues 73-105 (KIVQKGLRYGMILFIISEVFFFLGFFWAFYHSS) form a helical membrane-spanning segment. The Mitochondrial intermembrane portion of the chain corresponds to 106–128 (LAPTPELGGCWPPTGISPLNPLE). The helical transmembrane segment at 129 to 152 (VPLLNTSILLASGVSITWAHHSLM) threads the bilayer. At 153–155 (EGN) the chain is on the mitochondrial matrix side. Residues 156 to 183 (RKQMLQALTITIALGLYFTALQAMEYYE) traverse the membrane as a helical segment. The Mitochondrial intermembrane segment spans residues 184 to 190 (ASFTISD). The chain crosses the membrane as a helical span at residues 191-223 (GVYGSTFFVATGFHGLHVIIGTTFLITCLVRQT). Residues 224 to 232 (LYHFTSNHH) lie on the Mitochondrial matrix side of the membrane. A helical transmembrane segment spans residues 233-256 (FGFEAAAWYWHFVDVVWLFLYVSI). At 257–261 (YWWGS) the chain is on the mitochondrial intermembrane side.

Belongs to the cytochrome c oxidase subunit 3 family. In terms of assembly, component of the cytochrome c oxidase (complex IV, CIV), a multisubunit enzyme composed of 14 subunits. The complex is composed of a catalytic core of 3 subunits MT-CO1, MT-CO2 and MT-CO3, encoded in the mitochondrial DNA, and 11 supernumerary subunits COX4I, COX5A, COX5B, COX6A, COX6B, COX6C, COX7A, COX7B, COX7C, COX8 and NDUFA4, which are encoded in the nuclear genome. The complex exists as a monomer or a dimer and forms supercomplexes (SCs) in the inner mitochondrial membrane with NADH-ubiquinone oxidoreductase (complex I, CI) and ubiquinol-cytochrome c oxidoreductase (cytochrome b-c1 complex, complex III, CIII), resulting in different assemblies (supercomplex SCI(1)III(2)IV(1) and megacomplex MCI(2)III(2)IV(2)).

It localises to the mitochondrion inner membrane. The enzyme catalyses 4 Fe(II)-[cytochrome c] + O2 + 8 H(+)(in) = 4 Fe(III)-[cytochrome c] + 2 H2O + 4 H(+)(out). Its function is as follows. Component of the cytochrome c oxidase, the last enzyme in the mitochondrial electron transport chain which drives oxidative phosphorylation. The respiratory chain contains 3 multisubunit complexes succinate dehydrogenase (complex II, CII), ubiquinol-cytochrome c oxidoreductase (cytochrome b-c1 complex, complex III, CIII) and cytochrome c oxidase (complex IV, CIV), that cooperate to transfer electrons derived from NADH and succinate to molecular oxygen, creating an electrochemical gradient over the inner membrane that drives transmembrane transport and the ATP synthase. Cytochrome c oxidase is the component of the respiratory chain that catalyzes the reduction of oxygen to water. Electrons originating from reduced cytochrome c in the intermembrane space (IMS) are transferred via the dinuclear copper A center (CU(A)) of subunit 2 and heme A of subunit 1 to the active site in subunit 1, a binuclear center (BNC) formed by heme A3 and copper B (CU(B)). The BNC reduces molecular oxygen to 2 water molecules using 4 electrons from cytochrome c in the IMS and 4 protons from the mitochondrial matrix. The protein is Cytochrome c oxidase subunit 3 (MT-CO3) of Ornithorhynchus anatinus (Duckbill platypus).